The chain runs to 124 residues: Vicilin, 14 kDa component (124 aa).

The tract at residues Leu-23–Lys-57 is disordered. Asn-53 is a glycosylation site (N-linked (GlcNAc...) asparagine).

Belongs to the 7S seed storage protein family.

The protein localises to the vacuole. Its subcellular location is the aleurone grain. Functionally, seed storage protein. The polypeptide is Vicilin, 14 kDa component (Pisum sativum (Garden pea)).